The primary structure comprises 228 residues: Death domain-containing membrane protein NRADD (228 aa).

Topologically, residues 1–52 are extracellular; it reads MLYNVSKGVVYSDTALQGQDGDREGMWVGAGGALAPNTSSLFPPEPPGASSN. N-linked (GlcNAc...) asparagine glycosylation is found at N4 and N37. Residues 53-73 traverse the membrane as a helical; Signal-anchor for type III membrane protein segment; sequence IIPVYCALLATVILGLLAYVA. The Cytoplasmic segment spans residues 74 to 228; that stretch reads FKCWRSHKQR…SSPAESSSVV (155 aa). Residues 87-122 form a disordered region; the sequence is AKARTVELGDPDRDQRRGDSNVFVDSPPSLEPCIPS. Positions 90-105 are enriched in basic and acidic residues; that stretch reads RTVELGDPDRDQRRGD. The 80-residue stretch at 143 to 222 folds into the Death domain; it reads EEVQRLLMMG…DVVQVLSSPA (80 aa).

Interacts with NGFR. Interacts with NTRK1. Interacts with SORT1. As to expression, detected in lung and testis.

It localises to the cell membrane. The protein localises to the nucleus. Modulates NTRK1 signaling. Can activate several intracellular signaling pathways, leading to activation of JUN. Promotes apoptosis. Promotes translocation of SORT1 to the cell membrane, and thereby hinders lysosomal degradation of SOTR1 and promotes its interaction with NGFR. The polypeptide is Death domain-containing membrane protein NRADD (Nradd) (Mus musculus (Mouse)).